We begin with the raw amino-acid sequence, 66 residues long: Large ribosomal subunit protein bL35 (66 aa).

The span at 1-16 shows a compositional bias: basic residues; that stretch reads MPKQKTHRASAKRFKR. A disordered region spans residues 1–21; the sequence is MPKQKTHRASAKRFKRTGSGG.

It belongs to the bacterial ribosomal protein bL35 family.

The chain is Large ribosomal subunit protein bL35 from Streptococcus gordonii (strain Challis / ATCC 35105 / BCRC 15272 / CH1 / DL1 / V288).